The following is a 388-amino-acid chain: Valine--pyruvate aminotransferase (388 aa).

Lysine 234 is subject to N6-(pyridoxal phosphate)lysine.

The protein belongs to the class-I pyridoxal-phosphate-dependent aminotransferase family. Pyridoxal 5'-phosphate serves as cofactor.

The enzyme catalyses L-valine + pyruvate = 3-methyl-2-oxobutanoate + L-alanine. This is Valine--pyruvate aminotransferase from Mycobacterium tuberculosis (strain ATCC 25618 / H37Rv).